Consider the following 578-residue polypeptide: E3 ubiquitin-protein ligase Praja-1 (578 aa).

Positions 1-298 (MSHQERIASQ…KVPRRRRTMA (298 aa)) are disordered. Composition is skewed to basic and acidic residues over residues 57 to 67 (DYSRYPPREYR) and 107 to 116 (KFKDDPEKGA). A compositionally biased stretch (polar residues) spans 151 to 163 (SKQNGSSASQISS). Phosphothreonine is present on T231. Basic and acidic residues-rich tracts occupy residues 243–264 (RWRD…RGRG) and 273–290 (RYAE…ADKV). Phosphoserine occurs at positions 317 and 319. The interval 332–397 (RSREQPQSSS…QASLEEGEIP (66 aa)) is disordered. A compositionally biased stretch (low complexity) spans 359 to 373 (AGAGSLASAGSNGSG). Residues 377–395 (EVQDPSLQEEEQASLEEGE) are compositionally biased toward acidic residues. The RING-type zinc finger occupies 530–571 (CPICCSEYVKGEVATELPCHHYFHKPCVSIWLQKSGTCPVCR).

As to quaternary structure, binds ubiquitin-conjugating enzymes (E2s). Binds, in vitro and in vivo, the MAGE conserved domain of MAGED1. Binds weakly Necdin, in vitro. Interacts with UBE2D2. Substrate for E2-dependent ubiquitination. Expressed in brain, liver, kidney. Highest levels in brain where it is found in many regions including cortical and subcortical areas and in neurons of the amygdala. Weak expression also found in testis. Also expressed in developing embryo.

It catalyses the reaction S-ubiquitinyl-[E2 ubiquitin-conjugating enzyme]-L-cysteine + [acceptor protein]-L-lysine = [E2 ubiquitin-conjugating enzyme]-L-cysteine + N(6)-ubiquitinyl-[acceptor protein]-L-lysine.. Its function is as follows. Has E2-dependent E3 ubiquitin-protein ligase activity. Ubiquitinates MAGED1 antigen leading to its subsequent degradation by proteasome. May be involved in protein sorting. The chain is E3 ubiquitin-protein ligase Praja-1 (Pja1) from Mus musculus (Mouse).